Consider the following 906-residue polypeptide: Glutamate receptor 1 (906 aa).

The signal sequence occupies residues Met-1–Gly-18. Over Ala-19–Ala-536 the chain is Extracellular. Residues Asn-63, Asn-249, Asn-257, Asn-363, Asn-401, and Asn-406 are each glycosylated (N-linked (GlcNAc...) asparagine). A disulfide bond links Cys-75 and Cys-323. The L-glutamate site is built by Pro-492, Thr-494, and Arg-499. A helical membrane pass occupies residues Tyr-537–Val-557. Residues Ser-558 to Glu-584 lie on the Cytoplasmic side of the membrane. An intramembrane region (helical; Pore-forming) is located at residues Phe-585–Gln-600. Residues Gln-601–Cys-603 lie within the membrane without spanning it. The S-palmitoyl cysteine moiety is linked to residue Cys-603. Residues Asp-604–Ser-609 lie on the Cytoplasmic side of the membrane. Residues Leu-610–Tyr-630 traverse the membrane as a helical segment. Topologically, residues Thr-631–Asn-805 are extracellular. Ser-645 bears the Phosphoserine mark. L-glutamate is bound by residues Ser-668 and Thr-669. At Ser-710 the chain carries Phosphoserine. L-glutamate is bound at residue Glu-719. Cys-732 and Cys-787 form a disulfide bridge. A helical membrane pass occupies residues Val-806–Ile-826. Residues Glu-827 to Leu-906 are Cytoplasmic-facing. Cys-829 carries S-palmitoyl cysteine lipidation. Residues Ser-849 and Ser-863 each carry the phosphoserine modification. Positions Arg-861–Ser-880 are disordered. The segment covering Ser-863 to Ser-872 has biased composition (low complexity). The short motif at Ala-903–Leu-906 is the PDZ-binding element.

This sequence belongs to the glutamate-gated ion channel (TC 1.A.10.1) family. GRIA1 subfamily. In terms of assembly, homotetramer or heterotetramer of pore-forming glutamate receptor subunits; heteromeric assembly can be the result of both receptor subtype and flip-flop forms and according the composition, one partner can be dominant with respect to the fast desensitizing current component, whereas the other can determine the steady-state component. Tetramers may be formed by the dimerization of dimers. Found in a complex with GRIA2, GRIA3, GRIA4, CNIH2, CNIH3, CACNG2, CACNG3, CACNG4, CACNG5, CACNG7 and CACNG8. Interacts with HIP1 and RASGRF2. Interacts with SYNDIG1 and GRIA2. Interacts with DLG1 (via C-terminus). Interacts with LRFN1. Interacts with PRKG2. Interacts with CNIH2 and CACNG2. Interacts with CACNG5; this interaction modulates the gating. Interacts (via C-terminus) with PDLIM4 (via LIM domain); this interaction as well as the interaction of PDLIM4 with alpha-actinin is required for their colocalization in early endosomes. Interacts with SNX27 (via PDZ domain); the interaction is required for recycling to the plasma membrane when endocytosed and prevent degradation in lysosomes. Interacts (via PDZ-binding motif) with SHANK3 (via PDZ domain). Interacts with CACNG3; associates GRIA1 with the adapter protein complex 4 (AP-4) to target GRIA1 to the somatodendritic compartment of neurons. Interacts with CACNG2; this interaction mediates traffick to the plasma membrane and modulation of desensitization. Interaction with CNIH2 and CNIH3; this interaction promotes expression at the plasma membrane and extensively modulates their gating properties by slowing deactivation and desensitization kinetics. Found in a complex with GRIA2, GRIA3, GRIA4, DLG4, CACNG8 and CNIH2. In terms of processing, phosphorylated at Ser-645. Phosphorylated at Ser-710 by PKC. Phosphorylated at Ser-849 by PKC, PKA and CAMK2. Phosphorylated at Ser-863 by PKC, PKA and PRKG2. Phosphorylation of Ser-863 is reduced by induction of long-term depression and increased by induction of long-term potentiation. Post-translationally, palmitoylated. Depalmitoylated by CPT1C and upon L-glutamate stimulation. ZDHHC3/GODZ specifically palmitoylates Cys-603, which leads to Golgi retention and decreased cell surface expression. In contrast, Cys-829 palmitoylation does not affect cell surface expression but regulates stimulation-dependent endocytosis.

The protein localises to the cell membrane. It localises to the endoplasmic reticulum membrane. Its subcellular location is the postsynaptic cell membrane. The protein resides in the postsynaptic density membrane. It is found in the cell projection. The protein localises to the dendrite. It localises to the dendritic spine. Its subcellular location is the early endosome membrane. The protein resides in the recycling endosome membrane. It is found in the presynapse. The protein localises to the synapse. The catalysed reaction is Ca(2+)(in) = Ca(2+)(out). The enzyme catalyses Na(+)(in) = Na(+)(out). It carries out the reaction Mg(2+)(in) = Mg(2+)(out). It catalyses the reaction Li(+)(in) = Li(+)(out). The catalysed reaction is K(+)(in) = K(+)(out). The enzyme catalyses Sr(2+)(in) = Sr(2+)(out). In terms of biological role, ionotropic glutamate receptor that functions as a ligand-gated cation channel, gated by L-glutamate and glutamatergic agonists such as alpha-amino-3-hydroxy-5-methyl-4-isoxazolepropionic acid (AMPA), quisqualic acid, and kainic acid. L-glutamate acts as an excitatory neurotransmitter at many synapses in the central nervous system. Binding of the excitatory neurotransmitter L-glutamate induces a conformation change, leading to the opening of the cation channel, and thereby converts the chemical signal to an electrical impulse upon entry of monovalent and divalent cations such as sodium and calcium. The receptor then desensitizes rapidly and enters in a transient inactive state, characterized by the presence of bound agonist. In the presence of CACNG2 or CACNG4 or CACNG7 or CACNG8, shows resensitization which is characterized by a delayed accumulation of current flux upon continued application of L-glutamate. Calcium (Ca(2+)) permeability depends on subunits composition and, heteromeric channels containing edited GRIA2 subunit are calcium-impermeable. Also permeable to other divalents cations such as strontium(2+) and magnesium(2+) and monovalent cations such as potassium(1+) and lithium(1+). The sequence is that of Glutamate receptor 1 from Macaca fascicularis (Crab-eating macaque).